The following is a 484-amino-acid chain: Ribosome biogenesis protein YTM1 (484 aa).

Positions 13 to 95 are ubiquitin-like (UBL) domain; that stretch reads VKVTFTTTEA…ESNLTLQYVR (83 aa). WD repeat units lie at residues 122 to 161, 168 to 206, 216 to 255, 288 to 328, 330 to 373, 379 to 419, and 448 to 484; these read SPSGRWSGDNFQRGQDRILSASFDGLLRIWNASGQVIATS, GHTASIKAAKFLTNSQLASAGMDRTVRVWKYTESDHFSG, GHTGSIDSLEVDGASKRILTASADGSIGFWSTSKASAPEA, IHSA…VVTT, STSH…ATTS, GHAN…PATQ, and GEGCKVFGVVWDAELGIVSGAEDKRVQINAGRDVVAE.

This sequence belongs to the WD repeat WDR12/YTM1 family. In terms of assembly, component of the NOP7 complex, composed of ERB1, NOP7 and YTM1. The complex is held together by ERB1, which interacts with NOP7 via its N-terminal domain and with YTM1 via a high-affinity interaction between the seven-bladed beta-propeller domains of the 2 proteins. The NOP7 complex associates with the 66S pre-ribosome. Interacts (via UBL domain) with MDN1 (via VWFA/MIDAS domain).

It localises to the nucleus. Its subcellular location is the nucleolus. The protein resides in the nucleoplasm. In terms of biological role, component of the NOP7 complex, which is required for maturation of the 25S and 5.8S ribosomal RNAs and formation of the 60S ribosome. This is Ribosome biogenesis protein YTM1 from Chaetomium globosum (strain ATCC 6205 / CBS 148.51 / DSM 1962 / NBRC 6347 / NRRL 1970) (Soil fungus).